The following is a 144-amino-acid chain: NADH dehydrogenase [ubiquinone] 1 alpha subcomplex subunit 13 (144 aa).

N-acetylalanine is present on alanine 2. The helical transmembrane segment at 30–51 (LSGYSMLAIGIGTLIYGHWSIM) threads the bilayer. The tract at residues 102–144 (PDWKVGESVFHTTRWVPPLIGELYGLRTTEEALHASHGFMWYT) is important for inducing cell death.

This sequence belongs to the complex I NDUFA13 subunit family. In terms of assembly, complex I is composed of 45 different subunits. Interacts with CARD15, but not with CARD4. Interacts with STAT3, but not with STAT1, STAT2 and STAT5A. Interacts with OLFM4. As to quaternary structure, (Microbial infection) Interacts with HHV-8 IRF1, in the nucleus, with HPV-16 E6 and SV40 LT. Widely expressed, with highest expression in heart, skeletal muscle, liver, kidney and placenta. In intestinal mucosa, down-regulated in areas involved in Crohn disease and ulcerative colitis.

Its subcellular location is the mitochondrion inner membrane. It is found in the nucleus. In terms of biological role, accessory subunit of the mitochondrial membrane respiratory chain NADH dehydrogenase (Complex I), that is believed not to be involved in catalysis. Complex I functions in the transfer of electrons from NADH to the respiratory chain. The immediate electron acceptor for the enzyme is believed to be ubiquinone. Involved in the interferon/all-trans-retinoic acid (IFN/RA) induced cell death. This apoptotic activity is inhibited by interaction with viral IRF1. Prevents the transactivation of STAT3 target genes. May play a role in CARD15-mediated innate mucosal responses and serve to regulate intestinal epithelial cell responses to microbes. This Homo sapiens (Human) protein is NADH dehydrogenase [ubiquinone] 1 alpha subcomplex subunit 13 (NDUFA13).